The primary structure comprises 200 residues: dITP/XTP pyrophosphatase (200 aa).

5–10 (TRNEGK) provides a ligand contact to substrate. The active-site Proton acceptor is the Asp-67. Residue Asp-67 participates in Mg(2+) binding. Substrate is bound by residues Ser-68, 151-154 (FGYD), Lys-174, and 179-180 (HR).

This sequence belongs to the HAM1 NTPase family. Homodimer. The cofactor is Mg(2+).

It catalyses the reaction XTP + H2O = XMP + diphosphate + H(+). It carries out the reaction dITP + H2O = dIMP + diphosphate + H(+). The enzyme catalyses ITP + H2O = IMP + diphosphate + H(+). Its function is as follows. Pyrophosphatase that catalyzes the hydrolysis of nucleoside triphosphates to their monophosphate derivatives, with a high preference for the non-canonical purine nucleotides XTP (xanthosine triphosphate), dITP (deoxyinosine triphosphate) and ITP. Seems to function as a house-cleaning enzyme that removes non-canonical purine nucleotides from the nucleotide pool, thus preventing their incorporation into DNA/RNA and avoiding chromosomal lesions. This is dITP/XTP pyrophosphatase from Streptococcus pneumoniae serotype 4 (strain ATCC BAA-334 / TIGR4).